The chain runs to 100 residues: Urease subunit gamma (100 aa).

The protein belongs to the urease gamma subunit family. In terms of assembly, heterotrimer of UreA (gamma), UreB (beta) and UreC (alpha) subunits. Three heterotrimers associate to form the active enzyme.

The protein localises to the cytoplasm. The enzyme catalyses urea + 2 H2O + H(+) = hydrogencarbonate + 2 NH4(+). Its pathway is nitrogen metabolism; urea degradation; CO(2) and NH(3) from urea (urease route): step 1/1. This Synechococcus sp. (strain CC9902) protein is Urease subunit gamma.